We begin with the raw amino-acid sequence, 141 residues long: Protein NrdI (141 aa).

Belongs to the NrdI family.

In terms of biological role, probably involved in ribonucleotide reductase function. The chain is Protein NrdI from Wigglesworthia glossinidia brevipalpis.